The primary structure comprises 632 residues: FAD-binding monooxygenase ausB (632 aa).

The tract at residues Met-1 to His-50 is disordered. Composition is skewed to polar residues over residues Pro-15 to Ser-24 and Ala-31 to Leu-43. FAD is bound by residues Thr-116–Trp-119, Asp-128–Ile-129, and Tyr-134. Met-126 to Asp-128 serves as a coordination point for NADP(+). NADP(+)-binding positions include Thr-269–Gln-275 and Arg-292–Thr-293.

Belongs to the FAD-binding monooxygenase family. The cofactor is FAD.

It carries out the reaction protoaustinoid A + AH2 + O2 = berkeleyone A + A + H2O. It participates in secondary metabolite biosynthesis; terpenoid biosynthesis. In terms of biological role, FAD-binding monooxygenase; part of the gene cluster that mediates the biosynthesis of calidodehydroaustin, a fungal meroterpenoid. The first step of the pathway is the synthesis of 3,5-dimethylorsellinic acid by the polyketide synthase ausA. 3,5-dimethylorsellinic acid is then prenylated by the polyprenyl transferase ausN. Further epoxidation by the FAD-dependent monooxygenase ausM and cyclization by the probable terpene cyclase ausL lead to the formation of protoaustinoid A. Protoaustinoid A is then oxidized to spiro-lactone preaustinoid A3 by the combined action of the FAD-binding monooxygenases ausB and ausC, and the dioxygenase ausE. Acid-catalyzed keto-rearrangement and ring contraction of the tetraketide portion of preaustinoid A3 by ausJ lead to the formation of preaustinoid A4. The aldo-keto reductase ausK, with the help of ausH, is involved in the next step by transforming preaustinoid A4 into isoaustinone which is in turn hydroxylated by the P450 monooxygenase ausI to form austinolide. The cytochrome P450 monooxygenase ausG modifies austinolide to austinol. Austinol is further acetylated to austin by the O-acetyltransferase ausP, which spontaneously changes to dehydroaustin. The cytochrome P450 monooxygenase ausR then converts dehydroaustin is into 7-dehydrodehydroaustin. The hydroxylation catalyzed by ausR permits the O-acetyltransferase ausQ to add an additional acetyl group to the molecule, leading to the formation of acetoxydehydroaustin. The short chain dehydrogenase ausT catalyzes the reduction of the double bond present between carbon atoms 1 and 2 to convert 7-dehydrodehydroaustin into 1,2-dihydro-7-hydroxydehydroaustin. AusQ catalyzes not only an acetylation reaction but also the addition of the PKS ausV diketide product to 1,2-dihydro-7-hydroxydehydroaustin, forming precalidodehydroaustin. Finally, the iron/alpha-ketoglutarate-dependent dioxygenase converts precalidodehydroaustin into calidodehydroaustin. This Aspergillus calidoustus protein is FAD-binding monooxygenase ausB.